We begin with the raw amino-acid sequence, 1670 residues long: Collagen alpha-3(IV) chain (1670 aa).

The signal sequence occupies residues 1 to 28; it reads MSARTAPRPQVLLLPLLLVLLAAAPAAS. Positions 29-42 are 7S domain; the sequence is KGCVCKDKGQCFCD. Positions 43-1438 are triple-helical region; it reads GAKGEKGEKG…KGKRGDSGSP (1396 aa). Disordered regions lie at residues 49 to 78, 167 to 469, and 502 to 1442; these read GEKG…QGPK, LDAK…DGPK, and GRQG…ATWT. Over residues 176–200 the composition is skewed to pro residues; sequence PGAPGPQGLPGPPGFPGPVGPPGPP. Residues 202 to 212 show a composition bias toward low complexity; sequence FFGFPGAMGPR. The segment covering 217–231 has biased composition (basic and acidic residues); sequence HMGERVIGHKGERGV. The segment covering 242–251 has biased composition (low complexity); the sequence is GTVIVTLTGP. N-linked (GlcNAc...) asparagine glycosylation is present at Asn253. Basic and acidic residues predominate over residues 253–266; the sequence is NRTDLKGEKGDKGA. Positions 382 to 394 are enriched in low complexity; it reads SPGSSRPGLRGAP. Over residues 402–411 the composition is skewed to basic and acidic residues; that stretch reads SKGERGRPGK. The segment covering 415 to 428 has biased composition (low complexity); sequence GTPGSPGCAGSPGL. Composition is skewed to pro residues over residues 429 to 438, 598 to 618, and 654 to 675; these read PGSPGPPGPP, PGDP…PPGY, and VPGP…PPGI. The Cell attachment site signature appears at 791-793; sequence RGD. Positions 900 to 909 are enriched in pro residues; the sequence is IGPPGPPGNP. The span at 974–987 shows a compositional bias: low complexity; that stretch reads VPGMPGLKGLKGLP. The Cell attachment site signature appears at 996 to 998; that stretch reads RGD. Low complexity-rich tracts occupy residues 1013–1025, 1094–1105, and 1118–1133; these read IPGS…MPGS, LGPAGPEGAPGS, and HGDL…LGPP. Residues 1135-1148 are compositionally biased toward pro residues; it reads IRGPPGLPGFPGSP. Positions 1154 to 1156 match the Cell attachment site motif; the sequence is RGD. 2 stretches are compositionally biased toward low complexity: residues 1230 to 1250 and 1290 to 1299; these read PGAI…RGSP and PPGRLGAPGT. Positions 1306–1308 match the Cell attachment site motif; the sequence is RGD. A compositionally biased stretch (pro residues) spans 1332–1341; it reads PPGPIGPKGP. 2 consecutive short sequence motifs (cell attachment site) follow at residues 1345-1347 and 1432-1434; these read RGD. An epitope recognized by Goodpasture antibodies region spans residues 1427-1444; it reads GLKGKRGDSGSPATWTTR. The 225-residue stretch at 1445-1669 folds into the Collagen IV NC1 domain; sequence GFVFTRHSQT…SRCQVCMKKR (225 aa). Disulfide bonds link Cys1460/Cys1551, Cys1493/Cys1548, Cys1505/Cys1511, Cys1570/Cys1665, Cys1604/Cys1662, and Cys1616/Cys1622. A required for the anti-angiogenic activity of tumstatin region spans residues 1479-1557; the sequence is NQRAHGQDLG…CTVCEGPAIA (79 aa). Residue Met1533 forms an S-Lysyl-methionine sulfilimine (Met-Lys) (interchain with K-1651) linkage. Residues 1610-1628 form a required for the anti-tumor cell activity of tumstatin region; that stretch reads ASPFLECHGRGTCNYYSNS. Lys1651 is covalently cross-linked (S-Lysyl-methionine sulfilimine (Lys-Met) (interchain with M-1533)).

Belongs to the type IV collagen family. In terms of assembly, there are six type IV collagen isoforms, alpha 1(IV)-alpha 6(IV), each of which can form a triple helix structure with 2 other chains to generate type IV collagen network. The alpha 3(IV) chain forms a triple helical protomer with alpha 4(IV) and alpha 5(IV); this triple helical structure dimerizes through NC1-NC1 domain interactions such that the alpha 3(IV), alpha 4(IV) and alpha 5(IV) chains of one protomer connect with the alpha 5(IV), alpha 4(IV) and alpha 3(IV) chains of the opposite promoter, respectively. Interacts with ITGB3. Associates with LAMB2 at the neuromuscular junction and in GBM. In terms of processing, prolines at the third position of the tripeptide repeating unit (G-X-Y) are hydroxylated in some or all of the chains. Isoform 2 contains an additional N-linked glycosylation site. Post-translationally, type IV collagens contain numerous cysteine residues which are involved in inter- and intramolecular disulfide bonding. 12 of these, located in the NC1 domain, are conserved in all known type IV collagens. In terms of processing, the trimeric structure of the NC1 domains is stabilized by covalent bonds between Lys and Met residues. Phosphorylated. Thought to be phosphorylated by CERT, but CERT does not have kinase activity. As to expression, alpha 3 and alpha 4 type IV collagens are colocalized and present in kidney, eye, basement membranes of lens capsule, cochlea, lung, skeletal muscle, aorta, synaptic fibers, fetal kidney and fetal lung. PubMed:8083201 reports similar levels of expression of alpha 3 and alpha 4 type IV collagens in kidney, but PubMed:7523402 reports that in kidney levels of alpha 3 type IV collagen are significantly lower than those of alpha 4 type IV collagen. According to PubMed:8083201, alpha 3 type IV collagen is not detected in heart, brain, placenta, liver, pancreas, extrasynaptic muscle fibers, endoneurial and perineurial nerves, fetal brain, fetal heart and fetal liver. According to PubMed:7523402, alpha 3 type IV collagen is strongly expressed in pancreas, neuroretina and calvaria and not expressed in adrenal, ileum and skin. Isoform 1 and isoform 3 are strongly expressed in kidney, lung, suprarenal capsule, muscle and spleen, in each of these tissues isoform 1 is more abundant than isoform 3. Isoform 1 and isoform 3 are expressed at low levels in artery, fat, pericardium and peripherical nerve, but not in placenta, mesangium, skin, pleura and cultured umbilical endothelial cells.

It is found in the secreted. The protein localises to the extracellular space. The protein resides in the extracellular matrix. Its subcellular location is the basement membrane. Functionally, type IV collagen is the major structural component of glomerular basement membranes (GBM), forming a 'chicken-wire' meshwork together with laminins, proteoglycans and entactin/nidogen. Its function is as follows. Tumstatin, a cleavage fragment corresponding to the collagen alpha 3(IV) NC1 domain, possesses both anti-angiogenic and anti-tumor cell activity; these two anti-tumor properties may be regulated via RGD-independent ITGB3-mediated mechanisms. This is Collagen alpha-3(IV) chain (COL4A3) from Homo sapiens (Human).